We begin with the raw amino-acid sequence, 135 residues long: MRLLHTMLRVGDLQRSIDFYTKVLGMKLLRTSENPEYKYSLAFVGYGPETEEAVIELTYNWGVDKYELGTAYGHIALSVDNAAEACEKIRQNGGNVTREAGPVKGGTTVIAFVEDPDGYKIELIEEKDAGRGLGN.

One can recognise a VOC domain in the interval 2-126 (RLLHTMLRVG…DGYKIELIEE (125 aa)). Position 5 (histidine 5) interacts with Ni(2+). Arginine 9 provides a ligand contact to substrate. Glutamate 56 serves as a coordination point for Ni(2+). Substrate contacts are provided by asparagine 60 and histidine 74. Residues histidine 74 and glutamate 122 each contribute to the Ni(2+) site. The Proton donor/acceptor role is filled by glutamate 122.

The protein belongs to the glyoxalase I family. Homodimer. The cofactor is Ni(2+).

It carries out the reaction (R)-S-lactoylglutathione = methylglyoxal + glutathione. Its pathway is secondary metabolite metabolism; methylglyoxal degradation; (R)-lactate from methylglyoxal: step 1/2. Functionally, catalyzes the conversion of hemimercaptal, formed from methylglyoxal and glutathione, to S-lactoylglutathione. The chain is Lactoylglutathione lyase (gloA) from Escherichia coli O157:H7.